The primary structure comprises 341 residues: Tetraacyldisaccharide 4'-kinase (341 aa).

65 to 72 (TVGGSGKT) contributes to the ATP binding site.

It belongs to the LpxK family.

It carries out the reaction a lipid A disaccharide + ATP = a lipid IVA + ADP + H(+). It participates in glycolipid biosynthesis; lipid IV(A) biosynthesis; lipid IV(A) from (3R)-3-hydroxytetradecanoyl-[acyl-carrier-protein] and UDP-N-acetyl-alpha-D-glucosamine: step 6/6. Transfers the gamma-phosphate of ATP to the 4'-position of a tetraacyldisaccharide 1-phosphate intermediate (termed DS-1-P) to form tetraacyldisaccharide 1,4'-bis-phosphate (lipid IVA). The polypeptide is Tetraacyldisaccharide 4'-kinase (Shewanella woodyi (strain ATCC 51908 / MS32)).